A 387-amino-acid polypeptide reads, in one-letter code: MAETLFWTPLLVVLLAGLGDTEAQQTTLHPLVGRVFVHTLDHETFLSLPEHVAVPPAVHITYHAHLQGHPDLPRWLRYTQRSPHHPGFLYGSATPEDRGLQVIEVTAYNRDSFDTTRQRLVLEIGDPEGPLLPYQAEFLVRSHDAEEVLPSTPASRFLSALGGLWEPGELQLLNVTSALDRGGRVPLPIEGRKEGVYIKVGSASPFSTCLKMVASPDSHARCAQGQPPLLSCYDTLAPHFRVDWCNVTLVDKSVPEPADEVPTPGDGILEHDPFFCPPTEAPDRDFLVDALVTLLVPLLVALLLTLLLAYVMCCRREGRLKRDLATSDIQMVHHCTIHGNTEELRQMAASREVPRPLSTLPMFNVHTGERLPPRVDSAQVPLILDQH.

The signal sequence occupies residues 1-23 (MAETLFWTPLLVVLLAGLGDTEA). Topologically, residues 24 to 290 (QQTTLHPLVG…APDRDFLVDA (267 aa)) are extracellular. N-linked (GlcNAc...) asparagine glycosylation is found at N174 and N246. A helical membrane pass occupies residues 291-311 (LVTLLVPLLVALLLTLLLAYV). Residues 312–387 (MCCRREGRLK…AQVPLILDQH (76 aa)) lie on the Cytoplasmic side of the membrane. The residue at position 377 (S377) is a Phosphoserine.

Belongs to the sarcoglycan alpha/epsilon family. As to quaternary structure, interacts with the syntrophin SNTA1. Cross-link to form 2 major subcomplexes: one consisting of SGCB, SGCD and SGCG and the other consisting of SGCB and SGCD. The association between SGCB and SGCG is particularly strong while SGCA is loosely associated with the other sarcoglycans. Most strongly expressed in skeletal muscle. Also expressed in cardiac muscle and, at much lower levels, in lung. In the fetus, most abundant in cardiac muscle and, at lower levels, in lung. Also detected in liver and kidney. Not expressed in brain.

It localises to the cell membrane. Its subcellular location is the sarcolemma. It is found in the cytoplasm. The protein resides in the cytoskeleton. Its function is as follows. Component of the sarcoglycan complex, a subcomplex of the dystrophin-glycoprotein complex which forms a link between the F-actin cytoskeleton and the extracellular matrix. This is Alpha-sarcoglycan (SGCA) from Homo sapiens (Human).